A 304-amino-acid polypeptide reads, in one-letter code: Putative S-adenosyl-L-methionine-dependent methyltransferase MMAR_1057 (304 aa).

Residues Asp130 and 159–160 (DL) contribute to the S-adenosyl-L-methionine site.

Belongs to the UPF0677 family.

Its function is as follows. Exhibits S-adenosyl-L-methionine-dependent methyltransferase activity. This is Putative S-adenosyl-L-methionine-dependent methyltransferase MMAR_1057 from Mycobacterium marinum (strain ATCC BAA-535 / M).